The chain runs to 146 residues: Hemoglobin subunit delta (146 aa).

A Globin domain is found at 2–146; that stretch reads HLTGDEKSAV…VATALAHKYH (145 aa). At serine 50 the chain carries Phosphoserine. Histidine 63 and histidine 92 together coordinate heme b.

This sequence belongs to the globin family. Heterotetramer of two delta chains and two alpha chains. Red blood cells.

This chain is Hemoglobin subunit delta (HBD), found in Saimiri sciureus (Common squirrel monkey).